We begin with the raw amino-acid sequence, 248 residues long: uncharacterized protein (248 aa).

NADP(+) is bound at residue 8–32 (IVTGAAQGIGQAYAQALAREGASVV). Serine 143 contributes to the substrate binding site. Tyrosine 153 (proton acceptor) is an active-site residue.

The protein belongs to the short-chain dehydrogenases/reductases (SDR) family.

This is an uncharacterized protein from Mycobacterium tuberculosis (strain CDC 1551 / Oshkosh).